The primary structure comprises 320 residues: Ferrochelatase (320 aa).

Residues His194 and Glu275 each coordinate Fe cation.

Belongs to the ferrochelatase family. In terms of assembly, monomer.

It is found in the cytoplasm. It catalyses the reaction heme b + 2 H(+) = protoporphyrin IX + Fe(2+). It participates in porphyrin-containing compound metabolism; protoheme biosynthesis; protoheme from protoporphyrin-IX: step 1/1. Functionally, catalyzes the ferrous insertion into protoporphyrin IX. The protein is Ferrochelatase of Escherichia coli O157:H7 (strain EC4115 / EHEC).